The chain runs to 235 residues: Exosome complex component Rrp4 (235 aa).

The S1 motif domain maps to 67 to 139 (GDVVIGLIQS…KTRSPLLTVQ (73 aa)). In terms of domain architecture, KH spans 149–205 (GKIVEISPAKVPRVIGRKMSMLKTLEEKTECKIFVARNGRIHLECPNEDLEAIAVMA).

Belongs to the RRP4 family. Component of the archaeal exosome complex. Forms a trimer of Rrp4 and/or Csl4 subunits. The trimer associates with a hexameric ring-like arrangement composed of 3 Rrp41-Rrp42 heterodimers.

The protein resides in the cytoplasm. Its function is as follows. Non-catalytic component of the exosome, which is a complex involved in RNA degradation. Increases the RNA binding and the efficiency of RNA degradation. Confers strong poly(A) specificity to the exosome. This chain is Exosome complex component Rrp4, found in Aeropyrum pernix (strain ATCC 700893 / DSM 11879 / JCM 9820 / NBRC 100138 / K1).